Reading from the N-terminus, the 267-residue chain is Indole-3-glycerol phosphate synthase (267 aa).

Belongs to the TrpC family.

The catalysed reaction is 1-(2-carboxyphenylamino)-1-deoxy-D-ribulose 5-phosphate + H(+) = (1S,2R)-1-C-(indol-3-yl)glycerol 3-phosphate + CO2 + H2O. Its pathway is amino-acid biosynthesis; L-tryptophan biosynthesis; L-tryptophan from chorismate: step 4/5. This chain is Indole-3-glycerol phosphate synthase, found in Delftia acidovorans (strain DSM 14801 / SPH-1).